Here is a 668-residue protein sequence, read N- to C-terminus: DNA ligase (668 aa).

Residues 32–36 (DAEYD), 81–82 (SL), and glutamate 113 contribute to the NAD(+) site. Lysine 115 acts as the N6-AMP-lysine intermediate in catalysis. Arginine 136, glutamate 173, lysine 289, and lysine 313 together coordinate NAD(+). Zn(2+) contacts are provided by cysteine 407, cysteine 410, cysteine 425, and cysteine 431. Residues 590 to 668 (ASEQPFAGKT…EEELQQALQG (79 aa)) form the BRCT domain.

The protein belongs to the NAD-dependent DNA ligase family. LigA subfamily. Mg(2+) is required as a cofactor. Requires Mn(2+) as cofactor.

It carries out the reaction NAD(+) + (deoxyribonucleotide)n-3'-hydroxyl + 5'-phospho-(deoxyribonucleotide)m = (deoxyribonucleotide)n+m + AMP + beta-nicotinamide D-nucleotide.. Functionally, DNA ligase that catalyzes the formation of phosphodiester linkages between 5'-phosphoryl and 3'-hydroxyl groups in double-stranded DNA using NAD as a coenzyme and as the energy source for the reaction. It is essential for DNA replication and repair of damaged DNA. This Aeromonas hydrophila subsp. hydrophila (strain ATCC 7966 / DSM 30187 / BCRC 13018 / CCUG 14551 / JCM 1027 / KCTC 2358 / NCIMB 9240 / NCTC 8049) protein is DNA ligase.